A 337-amino-acid chain; its full sequence is C5a anaphylatoxin chemotactic receptor 2 (337 aa).

At 1-38 (MGNDSVSYEYGDYSDLSDRPVDCLDGACLAIDPLRVAP) the chain is on the extracellular side. N-linked (GlcNAc...) asparagine glycosylation is present at Asn3. A helical membrane pass occupies residues 39 to 61 (LPLYAAIFLVGVPGNAMVAWVAG). Residues 62-72 (KVARRRVGATW) lie on the Cytoplasmic side of the membrane. Residues 73–95 (LLHLAVADLLCCLSLPILAVPIA) traverse the membrane as a helical segment. Topologically, residues 96–114 (RGGHWPYGAVGCRALPSII) are extracellular. A disulfide bond links Cys107 and Cys186. The chain crosses the membrane as a helical span at residues 115–137 (LLTMYASVLLLAALSADLCFLAL). Over 138–149 (GPAWWSTVQRAC) the chain is Cytoplasmic. The chain crosses the membrane as a helical span at residues 150–172 (GVQVACGAAWTLALLLTVPSAIY). Residues 173 to 202 (RRLHQEHFPARLQCVVDYGGSSSTENAVTA) lie on the Extracellular side of the membrane. A helical transmembrane segment spans residues 203–225 (IRFLFGFLGPLVAVASCHSALLC). At 226–237 (WAARRCRPLGTA) the chain is on the cytoplasmic side. Residues 238 to 260 (IVVGFFVCWAPYHLLGLVLTVAA) traverse the membrane as a helical segment. The Extracellular segment spans residues 261-274 (PNSALLARALRAEP). The chain crosses the membrane as a helical span at residues 275–294 (LIVGLALAHSCLNPMLFLYF). Topologically, residues 295–337 (GRAQLRRSLPAACHWALRESQGQDESVDSKKSTSHDLVSEMEV) are cytoplasmic. Ser320 is subject to Phosphoserine.

It belongs to the G-protein coupled receptor 1 family. In terms of assembly, interacts with C3 (the anaphylatoxin peptide C3a and the adipogenic hormone ASP); the interaction occurs with higher affinity for ASP, enhancing the phosphorylation and activation of GPR77, recruitment of ARRB2 to the cell surface and endocytosis of GRP77. Frontal cortex, hippocampus, hypothalamus, pons and liver.

The protein localises to the cell membrane. Receptor for the chemotactic and inflammatory C3a, C4a and C5a anaphylatoxin peptides and also for their dearginated forms ASP/C3adesArg, C4adesArg and C5adesArg respectively. Couples weakly to G(i)-mediated signaling pathways. This chain is C5a anaphylatoxin chemotactic receptor 2 (C5AR2), found in Homo sapiens (Human).